The following is a 420-amino-acid chain: Transcription termination factor Rho (420 aa).

Residues 49–124 (DIFGGGVLEI…LKVDQVNDDK (76 aa)) enclose the Rho RNA-BD domain. Residues 170–175 (GKGQRG), 182–187 (KAGKTM), and arginine 213 contribute to the ATP site.

It belongs to the Rho family. As to quaternary structure, homohexamer. The homohexamer assembles into an open ring structure.

Facilitates transcription termination by a mechanism that involves Rho binding to the nascent RNA, activation of Rho's RNA-dependent ATPase activity, and release of the mRNA from the DNA template. This is Transcription termination factor Rho from Haemophilus influenzae (strain ATCC 51907 / DSM 11121 / KW20 / Rd).